The following is a 665-amino-acid chain: Cysteine-rich receptor-like protein kinase 26 (665 aa).

Positions 1-22 (MLSLLLPLISLLFQIQCFTVKS) are cleaved as a signal peptide. Topologically, residues 23-283 (QPVPLNQICS…GDKNRGVPKA (261 aa)) are extracellular. 2 Gnk2-homologous domains span residues 26 to 129 (PLNQ…NRTI) and 135 to 244 (ISPH…PWRF). N-linked (GlcNAc...) asparagine glycans are attached at residues Asn33, Asn37, Asn67, Asn126, Asn146, and Asn266. The disordered stretch occupies residues 251-275 (DDPSSVPATPSRPPKNETRSVTQGD). A helical membrane pass occupies residues 284 to 304 (LIFASASVAIVVLFIVLLVVF). The Cytoplasmic portion of the chain corresponds to 305 to 665 (LKLRRKENIR…YNSNTELYPR (361 aa)). A Protein kinase domain is found at 344-624 (FSLENKLGEG…VLMLDGHTIA (281 aa)). Residues 350 to 358 (LGEGGFGAV) and Lys372 each bind ATP. Position 417 is a phosphotyrosine (Tyr417). The active-site Proton acceptor is the Asp469. Ser473 carries the phosphoserine modification. A Phosphothreonine modification is found at Thr510. Tyr518 is modified (phosphotyrosine). The disordered stretch occupies residues 641 to 665 (SDSSSSLGHNAKTSNYNSNTELYPR). The segment covering 647–665 (LGHNAKTSNYNSNTELYPR) has biased composition (polar residues).

Belongs to the protein kinase superfamily. Ser/Thr protein kinase family. CRK subfamily.

The protein resides in the membrane. It carries out the reaction L-seryl-[protein] + ATP = O-phospho-L-seryl-[protein] + ADP + H(+). The enzyme catalyses L-threonyl-[protein] + ATP = O-phospho-L-threonyl-[protein] + ADP + H(+). The sequence is that of Cysteine-rich receptor-like protein kinase 26 (CRK26) from Arabidopsis thaliana (Mouse-ear cress).